The sequence spans 170 residues: Urease accessory protein UreE (170 aa).

Belongs to the UreE family.

The protein resides in the cytoplasm. In terms of biological role, involved in urease metallocenter assembly. Binds nickel. Probably functions as a nickel donor during metallocenter assembly. This chain is Urease accessory protein UreE, found in Helicobacter pylori (strain P12).